Here is a 588-residue protein sequence, read N- to C-terminus: MKEKAAETMEIPEGIPKDLEPKHPTLWRIIYYSFGVVLLATITAAYVAEFQVLKHEAILFSLGLYGLAMLLHLMMQSLFAFLEIRRVNKSELPCSFKKTVALTIAGYQENPEYLIKCLESCKYVKYPKDKLKIILVIDGNTEDDAYMMEMFKDVFHGEDVGTYVWKGNYHTVKKPEETNKGSCPEVSKPLNEDEGINMVEELVRNKRCVCIMQQWGGKREVMYTAFQAIGTSVDYVQVCDSDTKLDELATVEMVKVLESNDMYGAVGGDVRILNPYDSFISFMSSLRYWMAFNVERACQSYFDCVSCISGPLGMYRNNILQVFLEAWYRQKFLGTYCTLGDDRHLTNRVLSMGYRTKYTHKSRAFSETPSLYLRWLNQQTRWTKSYFREWLYNAQWWHKHHIWMTYESVVSFIFPFFITATVIRLIYAGTIWNVVWLLLCIQIMSLFKSIYACWLRGNFIMLLMSLYSMLYMTGLLPSKYFALLTLNKTGWGTSGRKKIVGNYMPILPLSIWAAVLCGGVGYSIYMDCQNDWSTPEKQKEMYHLLYGCVGYVMYWVIMAVMYWVWVKRCCRKRSQTVTLVHDIPDMCV.

At 1–28 (MKEKAAETMEIPEGIPKDLEPKHPTLWR) the chain is on the cytoplasmic side. A helical transmembrane segment spans residues 29–49 (IIYYSFGVVLLATITAAYVAE). Over 50–61 (FQVLKHEAILFS) the chain is Extracellular. A helical membrane pass occupies residues 62–82 (LGLYGLAMLLHLMMQSLFAFL). At 83–411 (EIRRVNKSEL…IWMTYESVVS (329 aa)) the chain is on the cytoplasmic side. The chain crosses the membrane as a helical span at residues 412 to 432 (FIFPFFITATVIRLIYAGTIW). Position 433 (Asn433) is a topological domain, extracellular. Residues 434–454 (VVWLLLCIQIMSLFKSIYACW) traverse the membrane as a helical segment. Topologically, residues 455 to 456 (LR) are cytoplasmic. Residues 457 to 477 (GNFIMLLMSLYSMLYMTGLLP) form a helical membrane-spanning segment. Topologically, residues 478 to 505 (SKYFALLTLNKTGWGTSGRKKIVGNYMP) are extracellular. The helical transmembrane segment at 506–526 (ILPLSIWAAVLCGGVGYSIYM) threads the bilayer. The Cytoplasmic segment spans residues 527 to 543 (DCQNDWSTPEKQKEMYH). The chain crosses the membrane as a helical span at residues 544-564 (LLYGCVGYVMYWVIMAVMYWV). The Extracellular segment spans residues 565 to 588 (WVKRCCRKRSQTVTLVHDIPDMCV).

It belongs to the NodC/HAS family. It depends on Mg(2+) as a cofactor. Expression moves as a gradient through the embryo. The mRNA is first expressed in the animal region of the blastula, and by early gastrula is found everywhere except in the outer layer of the dorsal blastopore lip. By mid-gastrula, protein is present in the inner ectodermal layer and the endoderm, then disappears from dorsal ectoderm as the neural plate is induced and later decays in a dorsoventral direction. Last expressed in ventral regions of the gut at the tailbud stage (at protein level).

Its subcellular location is the membrane. The catalysed reaction is [hyaluronan](n) + UDP-N-acetyl-alpha-D-glucosamine = N-acetyl-beta-D-glucosaminyl-(1-&gt;4)-[hyaluronan](n) + UDP + H(+). The enzyme catalyses N-acetyl-beta-D-glucosaminyl-(1-&gt;4)-[hyaluronan](n) + UDP-alpha-D-glucuronate = [hyaluronan](n+1) + UDP + H(+). It functions in the pathway glycan biosynthesis; hyaluronan biosynthesis. In terms of biological role, catalyzes the addition of GlcNAc or GlcUA monosaccharides to the nascent hyaluronan polymer. Therefore, it is essential to hyaluronan synthesis a major component of most extracellular matrices that has a structural role in tissues architectures and regulates cell adhesion, migration and differentiation. Also able to catalyze the synthesis of chito-oligosaccharide depending on the substrate. This chain is Hyaluronan synthase 1 (has1), found in Xenopus laevis (African clawed frog).